Reading from the N-terminus, the 167-residue chain is L-alanine exporter AlaE (167 aa).

A run of 4 helical transmembrane segments spans residues 25-45 (GTEFLADTVALILFFTTTGII), 50-70 (IAGMSWDQVLHARLIGAALMI), 105-125 (FQVPIYAAIIAFSGATGGGLV), and 129-149 (LGAALMMLFLGRPYGAFLNWV).

It belongs to the AlaE exporter family.

It localises to the cell inner membrane. Functionally, exports L-alanine. The sequence is that of L-alanine exporter AlaE from Pantoea sp. (strain At-9b).